The chain runs to 253 residues: Large ribosomal subunit protein uL4 (253 aa).

The disordered stretch occupies residues 78–107 (SRAARVPHAKGGRRAHPPKPEADRSEKVNT). Over residues 82–94 (RVPHAKGGRRAHP) the composition is skewed to basic residues. A compositionally biased stretch (basic and acidic residues) spans 95–107 (PKPEADRSEKVNT).

The protein belongs to the universal ribosomal protein uL4 family. In terms of assembly, part of the 50S ribosomal subunit.

Functionally, one of the primary rRNA binding proteins, this protein initially binds near the 5'-end of the 23S rRNA. It is important during the early stages of 50S assembly. It makes multiple contacts with different domains of the 23S rRNA in the assembled 50S subunit and ribosome. Forms part of the polypeptide exit tunnel. The sequence is that of Large ribosomal subunit protein uL4 from Methanosarcina acetivorans (strain ATCC 35395 / DSM 2834 / JCM 12185 / C2A).